The primary structure comprises 219 residues: MYSLVFVILMCIPFSFQTVYDDKSVCDSDNKEYMGIEVYVEATLDEPLRQTTCESKIHKYGASVSNGGLNISVDLLNCFLNFHTVGVYTNRDTVYAKFASLDPWTTEPINSMTHDDLVKLTEECIVDIYLKCEVDKTKDFMKTNGNRLKPRDFKTVPPSNVGSMIELQSDYCVNDVTTYVKIYDECGNIKQHSIPTLRDYFTTKNGQPRKILKKKFDNC.

An N-terminal signal peptide occupies residues 1–16 (MYSLVFVILMCIPFSF). Asn-70 carries an N-linked (GlcNAc...) asparagine; by host glycan.

Belongs to the orthopoxvirus OPG170 family.

The protein localises to the secreted. Functionally, may interact with several cellular chemokines to interfere with chemokine-glycosaminoglycan (GAG) interactions at the cell surface to alter chemotaxis of nearby responsive cells. The polypeptide is Protein OPG170 (OPG170) (Bos taurus (Bovine)).